A 317-amino-acid chain; its full sequence is Anamorsin homolog 2 (317 aa).

Residues 1 to 162 form an N-terminal SAM-like domain region; the sequence is MAKKVGVLLF…KPSWDSASVF (162 aa). The segment at 163–229 is linker; that stretch reads QLRKGSSQKG…EDDLLTEEDL (67 aa). Residues Cys240, Cys247, Cys250, and Cys252 each coordinate [2Fe-2S] cluster. A fe-S binding site A region spans residues 240 to 252; it reads CAPTKKACKNCTC. Positions 278, 281, 289, and 292 each coordinate [4Fe-4S] cluster. Short sequence motifs (cx2C motif) lie at residues 278–281 and 289–292; these read CGSC and CAGC. The interval 278–292 is fe-S binding site B; the sequence is CGSCGLGDAFRCAGC.

Belongs to the anamorsin family. As to quaternary structure, monomer. It depends on [2Fe-2S] cluster as a cofactor. Requires [4Fe-4S] cluster as cofactor.

It is found in the cytoplasm. It localises to the mitochondrion intermembrane space. Functionally, component of the cytosolic iron-sulfur (Fe-S) protein assembly (CIA) machinery. Required for the maturation of extramitochondrial Fe-S proteins. Part of an electron transfer chain functioning in an early step of cytosolic Fe-S biogenesis, facilitating the de novo assembly of a [4Fe-4S] cluster on the cytosolic Fe-S scaffold complex. Electrons are transferred from NADPH via a FAD- and FMN-containing diflavin oxidoreductase. Together with the diflavin oxidoreductase, also required for the assembly of the diferric tyrosyl radical cofactor of ribonucleotide reductase (RNR), probably by providing electrons for reduction during radical cofactor maturation in the catalytic small subunit. This chain is Anamorsin homolog 2, found in Physcomitrium patens (Spreading-leaved earth moss).